The primary structure comprises 371 residues: AA9 family lytic polysaccharide monooxygenase B (371 aa).

Positions 1-25 are cleaved as a signal peptide; sequence MSIAKIAGVVLGSAALVAGHGYVSG. Residues His-20 and His-104 each contribute to the Cu(2+) site. Intrachain disulfides connect Cys-74/Cys-194 and Cys-115/Cys-119. Asn-154 carries an N-linked (GlcNAc...) asparagine glycan. O2-binding residues include His-180 and Gln-189. Cu(2+) is bound at residue Tyr-191. The disordered stretch occupies residues 304–332; the sequence is HVQATSSSAAASTPTASSGASSGSGSSSS. The segment covering 307-332 has biased composition (low complexity); that stretch reads ATSSSAAASTPTASSGASSGSGSSSS.

This sequence belongs to the polysaccharide monooxygenase AA9 family. Cu(2+) serves as cofactor.

The protein resides in the secreted. It catalyses the reaction [(1-&gt;4)-beta-D-glucosyl]n+m + reduced acceptor + O2 = 4-dehydro-beta-D-glucosyl-[(1-&gt;4)-beta-D-glucosyl]n-1 + [(1-&gt;4)-beta-D-glucosyl]m + acceptor + H2O.. Its function is as follows. Lytic polysaccharide monooxygenase (LPMO) that depolymerizes crystalline and amorphous polysaccharides via the oxidation of scissile alpha- or beta-(1-4)-glycosidic bonds, yielding C1 and C4 oxidation products. Catalysis by LPMOs requires the reduction of the active-site copper from Cu(II) to Cu(I) by a reducing agent and H(2)O(2) or O(2) as a cosubstrate. In addition to cellulose, also cleaves the beta-(1!4)-glucan backbone of tamarind xyloglucan, irrespective of substitutions which contrasts with AA9A xyloglucan cleavage activity. The polypeptide is AA9 family lytic polysaccharide monooxygenase B (Aspergillus tamarii).